The chain runs to 526 residues: GMP synthase [glutamine-hydrolyzing] (526 aa).

One can recognise a Glutamine amidotransferase type-1 domain in the interval 8–208 (CILIIDFGSQ…AVDICRCEVT (201 aa)). The active-site Nucleophile is the cysteine 85. Catalysis depends on residues histidine 182 and glutamate 184. In terms of domain architecture, GMPS ATP-PPase spans 209-401 (WKPVYIVKNI…LGLPLNVVNQ (193 aa)). 236 to 242 (SGGIDSL) serves as a coordination point for ATP.

In terms of assembly, homodimer.

It carries out the reaction XMP + L-glutamine + ATP + H2O = GMP + L-glutamate + AMP + diphosphate + 2 H(+). The protein operates within purine metabolism; GMP biosynthesis; GMP from XMP (L-Gln route): step 1/1. Catalyzes the synthesis of GMP from XMP. The sequence is that of GMP synthase [glutamine-hydrolyzing] from Blochmanniella floridana.